Consider the following 454-residue polypeptide: NADH-quinone oxidoreductase subunit H (454 aa).

9 helical membrane passes run 18–38 (WWLVVVKAVFCFAFLMITVLF), 88–108 (VVYVLAPIVAAIPAFMAIAVI), 131–151 (LPIAMLYILAVASVGIYGIVL), 172–192 (MISYEIAMGAAFASVFLYSGS), 206–226 (WYIVLLPVSFVIYIVTMVGET), 256–276 (FMLAEYVNMVTVSAVSTTLFL), 296–316 (WWPMLWFVVKVQLLLFFFIWL), 328–348 (LMKLGWKVLIPVSVVWLMLVA), and 360–380 (FADIALYVGGGVLVLLLLSFV). The interval 395-454 (AEEPAAFDPMAGGFPVPPLPGQTLPPVPRRRPRRDRELIVSGGPDTASDGPANGKEASDG) is disordered. A compositionally biased stretch (pro residues) spans 409–421 (PVPPLPGQTLPPV).

Belongs to the complex I subunit 1 family. In terms of assembly, NDH-1 is composed of 14 different subunits. Subunits NuoA, H, J, K, L, M, N constitute the membrane sector of the complex.

The protein localises to the cell membrane. The catalysed reaction is a quinone + NADH + 5 H(+)(in) = a quinol + NAD(+) + 4 H(+)(out). In terms of biological role, NDH-1 shuttles electrons from NADH, via FMN and iron-sulfur (Fe-S) centers, to quinones in the respiratory chain. The immediate electron acceptor for the enzyme in this species is believed to be ubiquinone. Couples the redox reaction to proton translocation (for every two electrons transferred, four hydrogen ions are translocated across the cytoplasmic membrane), and thus conserves the redox energy in a proton gradient. This subunit may bind ubiquinone. The chain is NADH-quinone oxidoreductase subunit H from Streptomyces avermitilis (strain ATCC 31267 / DSM 46492 / JCM 5070 / NBRC 14893 / NCIMB 12804 / NRRL 8165 / MA-4680).